Here is a 20-residue protein sequence, read N- to C-terminus: FLGGLMKAFPAIICAVTKKC.

The cysteines at positions 14 and 20 are disulfide-linked.

As to expression, expressed by the skin glands.

Its subcellular location is the secreted. Functionally, antibacterial activity against Gram-positive bacterium S.aureus and Gram-negative bacterium E.coli. Has activity against C.albicans. In Lithobates clamitans (Green frog), this protein is Ranalexin-1Cb.